A 322-amino-acid chain; its full sequence is Stage V sporulation protein K (322 aa).

99–106 (GNPGTGKT) is an ATP binding site.

It belongs to the CbxX/CfxQ family.

This chain is Stage V sporulation protein K (spoVK), found in Bacillus subtilis (strain 168).